The following is a 479-amino-acid chain: UDP-glycosyltransferase 85A5 (479 aa).

UDP-alpha-D-glucose contacts are provided by residues Ser301, 358 to 360 (CPQ), 375 to 383 (HSGWNSTLE), and 397 to 400 (FAEQ).

It belongs to the UDP-glycosyltransferase family. Expressed in roots, shoots and leaves.

The sequence is that of UDP-glycosyltransferase 85A5 (UGT85A5) from Arabidopsis thaliana (Mouse-ear cress).